The sequence spans 315 residues: Heme oxygenase 2 (315 aa).

A compositionally biased stretch (polar residues) spans methionine 1 to glutamate 15. The interval methionine 1–methionine 29 is disordered. Serine 2 carries the N-acetylserine modification. At serine 2 the chain carries Phosphoserine. Residues serine 2 to serine 294 are Cytoplasmic-facing. Residues histidine 44, tyrosine 153, lysine 198, and arginine 202 each contribute to the heme b site. HRM repeat units lie at residues lysine 263 to alanine 268 and asparagine 280 to threonine 285. S-nitrosocysteine is present on residues cysteine 264 and cysteine 281. Residues leucine 295–methionine 315 form a helical; Anchor for type IV membrane protein membrane-spanning segment.

The protein belongs to the heme oxygenase family. A soluble form arises by proteolytic removal of the membrane anchor. In terms of processing, S-nitrosylated by BLVRB. Widely distributed in body with a high concentration in the brain.

It localises to the microsome membrane. Its subcellular location is the endoplasmic reticulum membrane. It carries out the reaction heme b + 3 reduced [NADPH--hemoprotein reductase] + 3 O2 = biliverdin IXalpha + CO + Fe(2+) + 3 oxidized [NADPH--hemoprotein reductase] + 3 H2O + H(+). Its activity is regulated as follows. Inhibited by metalloporphyrins such as Sn- and Zn-protoporphyrins. Functionally, catalyzes the oxidative cleavage of heme at the alpha-methene bridge carbon, released as carbon monoxide (CO), to generate biliverdin IXalpha, while releasing the central heme iron chelate as ferrous iron. This is Heme oxygenase 2 (Hmox2) from Rattus norvegicus (Rat).